A 500-amino-acid chain; its full sequence is NAD(P)H-quinone oxidoreductase chain 4, chloroplastic (500 aa).

14 consecutive transmembrane segments (helical) span residues Phe-4–Leu-24, Leu-37–Leu-57, Gly-84–Ala-104, Ser-111–Phe-129, Leu-134–Met-154, Phe-167–Leu-187, Ala-208–Ile-228, His-242–Val-262, Ala-272–Ala-292, Ile-305–Asp-325, Gly-330–Gly-350, Leu-386–Thr-406, Ile-416–Met-436, and Phe-462–Val-482.

It belongs to the complex I subunit 4 family.

Its subcellular location is the plastid. The protein resides in the chloroplast thylakoid membrane. It catalyses the reaction a plastoquinone + NADH + (n+1) H(+)(in) = a plastoquinol + NAD(+) + n H(+)(out). The catalysed reaction is a plastoquinone + NADPH + (n+1) H(+)(in) = a plastoquinol + NADP(+) + n H(+)(out). This Morus indica (Mulberry) protein is NAD(P)H-quinone oxidoreductase chain 4, chloroplastic.